A 1666-amino-acid polypeptide reads, in one-letter code: Latent-transforming growth factor beta-binding protein 4 (1666 aa).

The N-terminal stretch at 1 to 24 (MRRPGLGGPCPLLLLLLLPAATSA) is a signal peptide. The EGF-like 1 domain occupies 148 to 180 (ARVLCPLICHNGGVCVKPDRCLCPPDFAGKFCQ). 6 disulfide bridges follow: Cys-152–Cys-162, Cys-156–Cys-168, Cys-170–Cys-179, Cys-288–Cys-310, Cys-297–Cys-323, and Cys-311–Cys-326. In terms of domain architecture, TB 1 spans 286–338 (GYCFRELRGSECASPLPGLRTQEVCCRGEGLAWGVHDCHPCAEHLRNSNQVSG). Asn-351 carries an N-linked (GlcNAc...) asparagine glycan. In terms of domain architecture, EGF-like 2; calcium-binding spans 356 to 396 (DVDECATGGRCQHGECANTRGGYTCVCPDGFLLDSSRSSCI). 7 disulfides stabilise this stretch: Cys-360–Cys-371, Cys-366–Cys-380, Cys-382–Cys-395, Cys-408–Cys-430, Cys-417–Cys-443, Cys-431–Cys-446, and Cys-432–Cys-458. Positions 406 to 458 (GPCYRVLHDGGCSLPILRNITKQICCCSRVGKAWGRGCQLCPPYGSEGFREIC) constitute a TB 2 domain. N-linked (GlcNAc...) asparagine glycosylation is present at Asn-424. Residues 473–590 (YNTRPLNQDP…EIPESGPSSS (118 aa)) are disordered. The segment covering 491-502 (RVPPATPRPPTG) has biased composition (pro residues). The span at 521 to 561 (PRPRPEPRPRPESRPRPEPRPRPEPRPQPESQPRPESRPRP) shows a compositional bias: basic and acidic residues. A compositionally biased stretch (pro residues) spans 562–573 (ESQPWPEFPLPS). Residues 579-590 (GPEIPESGPSSS) are compositionally biased toward low complexity. An EGF-like 3 domain is found at 588–629 (SSSMCQRNPQVCGPGRCVPRPSGYTCACDPGFRLGPQGTRCI). 30 disulfide bridges follow: Cys-592–Cys-604, Cys-599–Cys-613, Cys-615–Cys-628, Cys-634–Cys-646, Cys-641–Cys-655, Cys-657–Cys-670, Cys-676–Cys-688, Cys-683–Cys-697, Cys-699–Cys-712, Cys-718–Cys-730, Cys-725–Cys-739, Cys-741–Cys-750, Cys-757–Cys-769, Cys-764–Cys-778, Cys-780–Cys-793, Cys-799–Cys-811, Cys-806–Cys-820, Cys-822–Cys-835, Cys-881–Cys-893, Cys-887–Cys-902, Cys-904–Cys-918, Cys-924–Cys-936, Cys-930–Cys-945, Cys-947–Cys-960, Cys-966–Cys-977, Cys-972–Cys-986, Cys-988–Cys-1001, Cys-1095–Cys-1107, Cys-1101–Cys-1116, and Cys-1118–Cys-1131. An EGF-like 4; calcium-binding domain is found at 630–671 (DIDECRRVPTPCAPGRCENTPGSFRCVCGTGFQAGPRATECL). Residues 672–713 (DVDECRRVPPPCDRGRCENTPGSFLCVCPAGYQAAPHGASCQ) form the EGF-like 5; calcium-binding domain. An EGF-like 6; calcium-binding domain is found at 714 to 751 (DVDECTQSPGLCGRGVCENLPGSFRCVCPAGFRGSACE). In terms of domain architecture, EGF-like 7; calcium-binding spans 753 to 794 (DVDECAQQPPPCGPGRCDNTAGSFHCACPAGFRSRGPGAPCQ). The EGF-like 8; calcium-binding domain occupies 795-836 (DVDECSRSPSPCAYGRCENTEGSFKCVCPTGFQPNAAGSECE). Positions 877–919 (DVDECSSGTPCGLHGQCTNTKGSFHCSCSTGYRAPSGQPGPCA) constitute an EGF-like 9; calcium-binding domain. In terms of domain architecture, EGF-like 10; calcium-binding spans 920–961 (DINECLEGDFCFPHGECLNTDGSFTCTCAPGYRPGPRGASCL). In terms of domain architecture, EGF-like 11; calcium-binding spans 962-1002 (DVDECSEEDLCQSGICTNTDGSFECICPPGHRAGPDLASCL). The EGF-like 12; calcium-binding domain maps to 1091-1132 (DVDECRNRSFCGAHAMCQNLPGSFQCVCDQGYEGARDGRHCV). An N-linked (GlcNAc...) asparagine glycan is attached at Asn-1097. The tract at residues 1171–1221 (TGRCVPPRAPAGTFPGSQPQAPASPSLPARPPAPPPPRRPSPPRQGPVSSG) is disordered. The span at 1185–1197 (PGSQPQAPASPSL) shows a compositional bias: low complexity. The segment covering 1198–1215 (PARPPAPPPPRRPSPPRQ) has biased composition (pro residues). The TB 3 domain occupies 1223–1277 (RECYFDTAAPDACDNILARNVTWQECCCTVGEGWGSGCRIQQCPGTETAEYQSLC). 10 disulfides stabilise this stretch: Cys-1225/Cys-1248, Cys-1235/Cys-1260, Cys-1249/Cys-1265, Cys-1250/Cys-1277, Cys-1299/Cys-1312, Cys-1307/Cys-1321, Cys-1323/Cys-1336, Cys-1342/Cys-1354, Cys-1349/Cys-1363, and Cys-1365/Cys-1378. Residue Asn-1242 is glycosylated (N-linked (GlcNAc...) asparagine). Residues 1295–1337 (DVDECQLFQDQVCKSGVCVNTAPGYSCYCSNGFYYHAHRLECV) form the EGF-like 13; calcium-binding domain. One can recognise an EGF-like 14; calcium-binding domain in the interval 1338 to 1379 (DNDECADEEPACEGGRCVNTVGSYHCTCEPPLVLDGSRRRCV). A glycan (N-linked (GlcNAc...) asparagine) is linked at Asn-1381. In terms of domain architecture, TB 4 spans 1391-1444 (GVCWQEVGPDLVCSRPRLDRQATYTECCCLYGEAWGMDCALCPAQDSDDFEALC). Disulfide bonds link Cys-1393/Cys-1417, Cys-1403/Cys-1429, Cys-1418/Cys-1432, and Cys-1419/Cys-1444. Residues 1488–1500 (VLPYDPYPPPPGP) are compositionally biased toward pro residues. Residues 1488 to 1566 (VLPYDPYPPP…SSERGSYTGA (79 aa)) are disordered. Thr-1564 is modified (phosphothreonine). EGF-like domains lie at 1575-1615 (EAEE…MSCV) and 1616-1660 (DVNE…HHCA). Cystine bridges form between Cys-1579-Cys-1590, Cys-1585-Cys-1599, Cys-1601-Cys-1614, Cys-1620-Cys-1635, Cys-1630-Cys-1644, and Cys-1646-Cys-1659.

Belongs to the LTBP family. As to quaternary structure, forms part of the large latent transforming growth factor beta precursor complex; removal is essential for activation of complex. Interacts with LTBP1 and TGFB1. Interacts with EFEMP2; this interaction promotes fibrillar deposition of EFEMP2. Post-translationally, contains hydroxylated asparagine residues.

It localises to the secreted. It is found in the extracellular space. The protein localises to the extracellular matrix. Its function is as follows. Key regulator of transforming growth factor beta (TGFB1, TGFB2 and TGFB3) that controls TGF-beta activation by maintaining it in a latent state during storage in extracellular space. Associates specifically via disulfide bonds with the Latency-associated peptide (LAP), which is the regulatory chain of TGF-beta, and regulates integrin-dependent activation of TGF-beta. The chain is Latent-transforming growth factor beta-binding protein 4 (Ltbp4) from Mus musculus (Mouse).